The chain runs to 182 residues: Cytidylate kinase (182 aa).

7-15 is an ATP binding site; that stretch reads GPPGSGKSS.

This sequence belongs to the cytidylate kinase family. Type 2 subfamily.

It localises to the cytoplasm. It catalyses the reaction CMP + ATP = CDP + ADP. The enzyme catalyses dCMP + ATP = dCDP + ADP. In Sulfolobus acidocaldarius (strain ATCC 33909 / DSM 639 / JCM 8929 / NBRC 15157 / NCIMB 11770), this protein is Cytidylate kinase (cmk).